Reading from the N-terminus, the 172-residue chain is MSTKAIEIKQQKADVITEQLKNSVSTIIVDYRGLTVAQVTELRKQLREAGVEFKVYKNTLVRRSAAAAGIEGIDEFLTGPNAIAFSTEEVVAPAKIIADFAKENEALEIKAGIIEGTVTSAEDVKAIASLPSKEGLISMVLSVLQAPIRNFAYAVKAVGEQQGGEETAAEEA.

Belongs to the universal ribosomal protein uL10 family. In terms of assembly, part of the ribosomal stalk of the 50S ribosomal subunit. The N-terminus interacts with L11 and the large rRNA to form the base of the stalk. The C-terminus forms an elongated spine to which L12 dimers bind in a sequential fashion forming a multimeric L10(L12)X complex.

In terms of biological role, forms part of the ribosomal stalk, playing a central role in the interaction of the ribosome with GTP-bound translation factors. The sequence is that of Large ribosomal subunit protein uL10 from Macrococcus caseolyticus (strain JCSC5402) (Macrococcoides caseolyticum).